The primary structure comprises 543 residues: Zinc metalloproteinase (543 aa).

The first 24 residues, 1-24 (MHPNYYLSPLAVAIALGIASPVKA), serve as a signal peptide directing secretion. Residues 25–207 (ADPIPLQKSS…PFVQWDDVKT (183 aa)) constitute a propeptide that is removed on maturation. H377 lines the Zn(2+) pocket. Residue E378 is part of the active site. Positions 381 and 401 each coordinate Zn(2+). H463 acts as the Proton donor in catalysis.

The protein belongs to the peptidase M4 family. It depends on Zn(2+) as a cofactor.

Its subcellular location is the secreted. In terms of biological role, cleaves collagen, gelatin, casein, alpha-1-antitrypsin, and bovine insulin. May play a role in the pathogenesis of legionnaires disease. This Legionella pneumophila protein is Zinc metalloproteinase.